The primary structure comprises 661 residues: ATP-dependent RNA helicase vasa (661 aa).

Residues 1 to 10 (MSDDWDDEPI) show a composition bias toward acidic residues. Residues 1–186 (MSDDWDDEPI…RRRRNEDDIN (186 aa)) are disordered. A Phosphoserine modification is found at Ser-22. Thr-27 is subject to Phosphothreonine. Composition is skewed to gly residues over residues 38–52 (DGVGGSGGEGGGYQG) and 60–83 (RIGGGRGGGAGGYRGGNRDGGGFH). Residues 85-95 (GRREGERDFRG) are compositionally biased toward basic and acidic residues. Tandem repeats lie at residues 93-99 (FRGGEGG), 100-106 (FRGGQGG), 107-113 (SRGGQGG), 114-120 (SRGGQGG), and 121-127 (FRGGEGG). The interval 93–127 (FRGGEGGFRGGQGGSRGGQGGSRGGQGGFRGGEGG) is 5 X 7 AA tandem repeats of [FS]-R-G-G-[EQ]-G-G. A compositionally biased stretch (gly residues) spans 96–129 (GEGGFRGGQGGSRGGQGGSRGGQGGFRGGEGGFR). The span at 131 to 172 (RLYENEDGDERRGRLDREERGGERRGRLDREERGGERGERGD) shows a compositional bias: basic and acidic residues. The short motif at 184–188 (DINNN) is the B30.2/SPRY domain-binding motif element. A required for posterior localization in oocyte region spans residues 184–203 (DINNNNNIVEDVERKREFYI). The short motif at 245–273 (QHFTSADLRDIIIDNVNKSGYKIPTPIQK) is the Q motif element. Residues 276–453 (IPVISSGRDL…GEFLKNYVFV (178 aa)) form the Helicase ATP-binding domain. 289 to 296 (AQTGSGKT) contributes to the ATP binding site. Residues 399–402 (DEAD) carry the DEAD box motif. The 148-residue stretch at 477-624 (KRSKLIEILS…TVPDFLRTCG (148 aa)) folds into the Helicase C-terminal domain.

It belongs to the DEAD box helicase family. DDX4/VASA subfamily. As to quaternary structure, interacts with eIF5B and faf. Interacts with gus (via B30.2/SPRY domain) and Fsn (via B30.2/SPRY domain). Interacts with aub, me31B, eIF-4a and TER94. Interacts with piwi; this interaction is RNA independent. Interacts with Dcr-1 and Fmr1; these interactions occur in the polar granules. Requires Mg(2+) as cofactor. Post-translationally, ubiquitinated during oogenesis. Deubiquitinated by faf, which protects this protein from proteasome-mediated degradation. As to expression, abundantly expressed in the female germline. Gus and faf are required for vas expression in the posterior pole of the oocyte.

Its subcellular location is the cytoplasm. It localises to the perinuclear region. It is found in the cytoplasmic ribonucleoprotein granule. The catalysed reaction is ATP + H2O = ADP + phosphate + H(+). In terms of biological role, involved in translational control mechanisms operating in early stages of oogenesis. Required maternally in many stages of oogenesis, including cystocyte differentiation, oocyte differentiation, and specification of anterior-posterior polarity in the developing cysts. Essential for the formation and/or structural integrity of perinuclear nuage particles during germ cell formation. Required for gus, Fsn and aub accumulation at the posterior pole of the embryo. Required for the localization of vas to the perinuclear region of nurse cells. May have a role in production of piwi-interacting RNA (piRNA). In Drosophila melanogaster (Fruit fly), this protein is ATP-dependent RNA helicase vasa.